The primary structure comprises 105 residues: Ketoisovalerate oxidoreductase subunit VorD (105 aa).

4Fe-4S ferredoxin-type domains lie at 44–73 and 74–103; these read FMPVIDESKCVKCYICWKYCPEPAIYIKED and GFVAIDYDYCKGCGICANECPTKAITMVRE. [4Fe-4S] cluster is bound by residues C53, C56, C59, C63, C83, C86, C89, and C93.

As to quaternary structure, heterotetramer of one alpha, one beta, one delta and one gamma chain. Requires [4Fe-4S] cluster as cofactor.

It catalyses the reaction 3-methyl-2-oxobutanoate + 2 oxidized [2Fe-2S]-[ferredoxin] + CoA = 2-methylpropanoyl-CoA + 2 reduced [2Fe-2S]-[ferredoxin] + CO2 + H(+). The chain is Ketoisovalerate oxidoreductase subunit VorD (vorD) from Pyrococcus horikoshii (strain ATCC 700860 / DSM 12428 / JCM 9974 / NBRC 100139 / OT-3).